The primary structure comprises 356 residues: Arginine kinase Scy s 2 (356 aa).

Positions 9-91 (KLEEGFKKLE…FDPIIEDYHK (83 aa)) constitute a Phosphagen kinase N-terminal domain. Residue 64-68 (GVGVY) participates in L-arginine binding. The Phosphagen kinase C-terminal domain occupies 119–356 (FVISTRVRCG…LELIKMEKEM (238 aa)). ATP is bound by residues 122-126 (STRVR) and His185. Glu225 serves as a coordination point for L-arginine. An ATP-binding site is contributed by Arg229. Cys271 serves as a coordination point for L-arginine. Residues 280–284 (RASVH) and 309–314 (RGTRGE) contribute to the ATP site. Glu314 contacts L-arginine.

Belongs to the ATP:guanido phosphotransferase family. In terms of tissue distribution, muscle (at protein level).

It carries out the reaction L-arginine + ATP = N(omega)-phospho-L-arginine + ADP + H(+). Functionally, catalyzes the reversible transfer of high energy ATP gamma-phosphate group to L-arginine. The sequence is that of Arginine kinase Scy s 2 from Scylla serrata (Mud crab).